We begin with the raw amino-acid sequence, 365 residues long: Chorismate synthase (365 aa).

R46 contacts NADP(+). Residues 124-126 (RAS), G284, 299-303 (KPTPS), and R326 each bind FMN.

It belongs to the chorismate synthase family. It depends on FMNH2 as a cofactor.

The catalysed reaction is 5-O-(1-carboxyvinyl)-3-phosphoshikimate = chorismate + phosphate. It functions in the pathway metabolic intermediate biosynthesis; chorismate biosynthesis; chorismate from D-erythrose 4-phosphate and phosphoenolpyruvate: step 7/7. Functionally, catalyzes the anti-1,4-elimination of the C-3 phosphate and the C-6 proR hydrogen from 5-enolpyruvylshikimate-3-phosphate (EPSP) to yield chorismate, which is the branch point compound that serves as the starting substrate for the three terminal pathways of aromatic amino acid biosynthesis. This reaction introduces a second double bond into the aromatic ring system. The chain is Chorismate synthase from Pyrobaculum neutrophilum (strain DSM 2338 / JCM 9278 / NBRC 100436 / V24Sta) (Thermoproteus neutrophilus).